Here is a 479-residue protein sequence, read N- to C-terminus: uncharacterized protein (479 aa).

The next 8 membrane-spanning stretches (helical) occupy residues Val-25–Phe-45, Ile-63–Gly-83, Leu-110–Phe-130, Gly-133–Leu-153, Val-175–Ile-195, Ile-229–Leu-249, Leu-287–Ile-307, and Leu-328–Leu-348.

In the C-terminal section; belongs to the GatC family.

The protein resides in the cell membrane. This is an uncharacterized protein from Mycoplasma pneumoniae (strain ATCC 29342 / M129 / Subtype 1) (Mycoplasmoides pneumoniae).